Consider the following 509-residue polypeptide: Maturase K (509 aa).

It belongs to the intron maturase 2 family. MatK subfamily.

It localises to the plastid. The protein localises to the chloroplast. Its function is as follows. Usually encoded in the trnK tRNA gene intron. Probably assists in splicing its own and other chloroplast group II introns. This Nicotiana bigelovii (Bigelov's tobacco) protein is Maturase K.